We begin with the raw amino-acid sequence, 148 residues long: MQNRPKSVLTPARLGTSGVVRNTLEDPWVRFQIELEFVQSLGNPDYLTFLAQQGCFDKPEFINYLSYLQYWKSPSYSRFITYPFCLHMLDLLQSPDFRREVAHESVTRFIDDQMLLHWKNYLRKRAEMVNKHVQSLDAMATPGPGPSS.

It belongs to the Mediator complex subunit 31 family. As to quaternary structure, component of the Mediator complex.

Its subcellular location is the nucleus. Its function is as follows. Component of the Mediator complex, a coactivator involved in the regulated transcription of nearly all RNA polymerase II-dependent genes. Mediator functions as a bridge to convey information from gene-specific regulatory proteins to the basal RNA polymerase II transcription machinery. Mediator is recruited to promoters by direct interactions with regulatory proteins and serves as a scaffold for the assembly of a functional preinitiation complex with RNA polymerase II and the general transcription factors. The sequence is that of Mediator of RNA polymerase II transcription subunit 31 from Taenia solium (Pork tapeworm).